The following is a 110-amino-acid chain: Ribonuclease P protein component 1 (110 aa).

The protein belongs to the eukaryotic/archaeal RNase P protein component 1 family. In terms of assembly, consists of a catalytic RNA component and at least 4-5 protein subunits.

Its subcellular location is the cytoplasm. The catalysed reaction is Endonucleolytic cleavage of RNA, removing 5'-extranucleotides from tRNA precursor.. In terms of biological role, part of ribonuclease P, a protein complex that generates mature tRNA molecules by cleaving their 5'-ends. This chain is Ribonuclease P protein component 1, found in Methanosarcina acetivorans (strain ATCC 35395 / DSM 2834 / JCM 12185 / C2A).